A 156-amino-acid polypeptide reads, in one-letter code: Small ribosomal subunit protein uS7 (156 aa).

It belongs to the universal ribosomal protein uS7 family. As to quaternary structure, part of the 30S ribosomal subunit. Contacts proteins S9 and S11.

Its function is as follows. One of the primary rRNA binding proteins, it binds directly to 16S rRNA where it nucleates assembly of the head domain of the 30S subunit. Is located at the subunit interface close to the decoding center, probably blocks exit of the E-site tRNA. The chain is Small ribosomal subunit protein uS7 from Desulfosudis oleivorans (strain DSM 6200 / JCM 39069 / Hxd3) (Desulfococcus oleovorans).